Here is a 307-residue protein sequence, read N- to C-terminus: MLKGRSLIDPMDFTVDELEEIFKLADDIIACPKEYMHAAEGKILATLFYEPSTRTRFSFETAMLRLGGQVVGFSEPNSSSVSKGETIADTIRVVSCYADIAAMRHPKEGAPKVASMYSSIPVINAGDGGHQHPTQTLTDLLTMRRTKKRLSNLTIGMCGDLKFGRTVHSLIKAMSRYDNNKIVLISPDELKVPEYIKKEILDKNNIEYKEAKRIEDVIEELDVLYMTRVQKERFFNEEDYIRLKDSYILNENKLKTAKKDMIILHPLPRVNEISYEVDNDERAYYFKQAKNGMYVRMALMAKLMGVL.

Residues R54 and T55 each contribute to the carbamoyl phosphate site. Residue K83 participates in L-aspartate binding. Carbamoyl phosphate contacts are provided by R104, H132, and Q135. L-aspartate contacts are provided by R165 and R228. 2 residues coordinate carbamoyl phosphate: L267 and P268.

Belongs to the aspartate/ornithine carbamoyltransferase superfamily. ATCase family. As to quaternary structure, heterododecamer (2C3:3R2) of six catalytic PyrB chains organized as two trimers (C3), and six regulatory PyrI chains organized as three dimers (R2).

It catalyses the reaction carbamoyl phosphate + L-aspartate = N-carbamoyl-L-aspartate + phosphate + H(+). It functions in the pathway pyrimidine metabolism; UMP biosynthesis via de novo pathway; (S)-dihydroorotate from bicarbonate: step 2/3. Catalyzes the condensation of carbamoyl phosphate and aspartate to form carbamoyl aspartate and inorganic phosphate, the committed step in the de novo pyrimidine nucleotide biosynthesis pathway. The protein is Aspartate carbamoyltransferase catalytic subunit of Clostridium acetobutylicum (strain ATCC 824 / DSM 792 / JCM 1419 / IAM 19013 / LMG 5710 / NBRC 13948 / NRRL B-527 / VKM B-1787 / 2291 / W).